Here is a 323-residue protein sequence, read N- to C-terminus: L-lactate dehydrogenase 1 (323 aa).

Residues Val-18, Asp-39, Tyr-69, and Gly-83–Ala-84 contribute to the NAD(+) site. Positions 86 and 92 each coordinate substrate. NAD(+)-binding positions include Ser-105, Val-122–Asn-124, and Ser-147. Asn-124–Asp-127 contributes to the substrate binding site. Position 152 to 155 (Asp-152 to Arg-155) interacts with substrate. Catalysis depends on His-179, which acts as the Proton acceptor. Tyr-223 is subject to Phosphotyrosine. Thr-232 serves as a coordination point for substrate.

The protein belongs to the LDH/MDH superfamily. LDH family. As to quaternary structure, homotetramer.

It is found in the cytoplasm. The catalysed reaction is (S)-lactate + NAD(+) = pyruvate + NADH + H(+). The protein operates within fermentation; pyruvate fermentation to lactate; (S)-lactate from pyruvate: step 1/1. Its function is as follows. Catalyzes the conversion of lactate to pyruvate. The protein is L-lactate dehydrogenase 1 of Lactobacillus acidophilus (strain ATCC 700396 / NCK56 / N2 / NCFM).